The primary structure comprises 456 residues: Phospholipase A1 member A (456 aa).

The signal sequence occupies residues 1 to 25 (MPPDFWERCFWLWGLLLWLSVGSTG). The N-linked (GlcNAc...) asparagine glycan is linked to asparagine 34. The active-site Nucleophile is serine 166. The active-site Charge relay system is the aspartate 190. Cysteine 245 and cysteine 258 form a disulfide bridge. Histidine 260 acts as the Charge relay system in catalysis. 2 disulfides stabilise this stretch: cysteine 282/cysteine 293 and cysteine 296/cysteine 304.

The protein belongs to the AB hydrolase superfamily. Lipase family.

The protein resides in the secreted. It carries out the reaction a 1,2-diacyl-sn-glycero-3-phospho-L-serine + H2O = a 2-acyl-sn-glycero-3-phospho-L-serine + a fatty acid + H(+). It catalyses the reaction 1,2-di-(9Z)-octadecenoyl-sn-glycero-3-phospho-L-serine + H2O = 2-(9Z-octadecenoyl)-sn-glycero-3-phospho-L-serine + (9Z)-octadecenoate + H(+). The catalysed reaction is 1-hexadecanoyl-2-(5Z,8Z,11Z,14Z-eicosatetraenoyl)-sn-glycero-3-phospho-L-serine + H2O = 2-(5Z,8Z,11Z,14Z)-eicosatetraenoyl-sn-glycero-3-phospho-L-serine + hexadecanoate + H(+). The enzyme catalyses a 1-acyl-sn-glycero-3-phospho-L-serine + H2O = sn-glycero-3-phospho-L-serine + a fatty acid + H(+). It carries out the reaction 1-(9Z-octadecenoyl)-sn-glycero-3-phospho-L-serine + H2O = sn-glycero-3-phospho-L-serine + (9Z)-octadecenoate + H(+). In terms of biological role, hydrolyzes the ester bond of the acyl group attached at the sn-1 position of phosphatidylserines (phospholipase A1 activity) and 1-acyl-2-lysophosphatidylserines (lysophospholipase activity) in the pathway of phosphatidylserines acyl chain remodeling. Cleaves phosphatidylserines exposed on the outer leaflet of the plasma membrane of apoptotic cells producing 2-acyl-1-lysophosphatidylserines, which in turn enhance mast cell activation and histamine production. Has no activity toward other glycerophospholipids including phosphatidylcholines, phosphatidylethanolamines, phosphatidic acids or phosphatidylinositols, or glycerolipids such as triolein. This is Phospholipase A1 member A (PLA1A) from Bos taurus (Bovine).